Consider the following 189-residue polypeptide: MEALHKKIREEGIVLSDQVLKVDAFLNHQIDPALMKEIGDEFARLFADAGVTKIVTIEASGIAPAVMAGLNMGVPVIFARKHQSLTLTENLLSATVYSFTKQVESTVAISPRHLSSDDHVLIIDDFLANGKASQALISIIKQAGATVAGLGIVIEKSFQGGRAELDAQGYRVESLARVESLAGGVVTFK.

L20 and N27 together coordinate xanthine. 128–132 (ANGKA) provides a ligand contact to 5-phospho-alpha-D-ribose 1-diphosphate. K156 contributes to the xanthine binding site.

It belongs to the purine/pyrimidine phosphoribosyltransferase family. Xpt subfamily. In terms of assembly, homodimer.

It localises to the cytoplasm. The enzyme catalyses XMP + diphosphate = xanthine + 5-phospho-alpha-D-ribose 1-diphosphate. It participates in purine metabolism; XMP biosynthesis via salvage pathway; XMP from xanthine: step 1/1. Its function is as follows. Converts the preformed base xanthine, a product of nucleic acid breakdown, to xanthosine 5'-monophosphate (XMP), so it can be reused for RNA or DNA synthesis. In Pseudomonas savastanoi pv. phaseolicola (strain 1448A / Race 6) (Pseudomonas syringae pv. phaseolicola (strain 1448A / Race 6)), this protein is Xanthine phosphoribosyltransferase.